A 339-amino-acid polypeptide reads, in one-letter code: Methionine synthase (339 aa).

His-212, Cys-214, and Cys-295 together coordinate Zn(2+).

It belongs to the archaeal MetE family. It depends on Zn(2+) as a cofactor.

Its pathway is amino-acid biosynthesis; L-methionine biosynthesis via de novo pathway. Its function is as follows. Catalyzes the transfer of a methyl group to L-homocysteine resulting in methionine formation. The physiological methyl donor is unknown. In Sulfolobus acidocaldarius (strain ATCC 33909 / DSM 639 / JCM 8929 / NBRC 15157 / NCIMB 11770), this protein is Methionine synthase.